The primary structure comprises 498 residues: Glutathione hydrolase 6 (498 aa).

Residues 1 to 49 (MDATTGAVLYQKLQLWEPGMESEEEEEEEEIAEPLVLSLRRLQNTPGNK) lie on the Cytoplasmic side of the membrane. The chain crosses the membrane as a helical; Signal-anchor for type II membrane protein span at residues 50-70 (VGGLPGAWTRLLAGLLLLAVS). Topologically, residues 71-498 (SSLALRQLQG…PSGCCPFQGY (428 aa)) are extracellular. Asparagine 162, asparagine 167, and asparagine 376 each carry an N-linked (GlcNAc...) asparagine glycan.

It belongs to the gamma-glutamyltransferase family. As to quaternary structure, heterodimer composed of the light and heavy chains. The active site is located in the light chain. Cleaved by autocatalysis into a large and a small subunit and the autocatalytic cleavage is essential to the functional activation of the enzyme.

Its subcellular location is the membrane. The catalysed reaction is an N-terminal (5-L-glutamyl)-[peptide] + an alpha-amino acid = 5-L-glutamyl amino acid + an N-terminal L-alpha-aminoacyl-[peptide]. The enzyme catalyses glutathione + H2O = L-cysteinylglycine + L-glutamate. It catalyses the reaction an S-substituted glutathione + H2O = an S-substituted L-cysteinylglycine + L-glutamate. The protein operates within sulfur metabolism; glutathione metabolism. In terms of biological role, hydrolyzes and transfers gamma-glutamyl moieties from glutathione and other gamma-glutamyl compounds to acceptors. The sequence is that of Glutathione hydrolase 6 from Rattus norvegicus (Rat).